A 289-amino-acid chain; its full sequence is Signal peptidase I (289 aa).

Topologically, residues 1-43 are cytoplasmic; sequence MKKLTSTTTTLWDNKLFINNLKNFMQTNTESNNNKTTAQEWKS. Residues 44–64 form a helical membrane-spanning segment; sequence FILVVVIALMIRILIIESFVV. Over 65–289 the chain is Periplasmic; it reads PTGSMKATIL…IFRNLYSIED (225 aa). Active-site residues include Ser68 and Lys131.

It belongs to the peptidase S26 family.

The protein localises to the cell inner membrane. The catalysed reaction is Cleavage of hydrophobic, N-terminal signal or leader sequences from secreted and periplasmic proteins.. The protein is Signal peptidase I (lepB) of Rickettsia bellii (strain OSU 85-389).